A 753-amino-acid chain; its full sequence is Protein-lysine N-methyltransferase SMYD4 (753 aa).

112 to 114 (RSA) is a binding site for S-adenosyl-L-methionine. An SET domain is found at 186-528 (DGVSVYFSSD…AGQEILHCYG (343 aa)). C246, C249, C259, C262, C268, C272, H281, and C285 together coordinate Zn(2+). Residues 246–285 (CHHCLSQSLSFVPCPKCSYARYCGESCQKDAWDQWHQWEC) form an MYND-type zinc finger. Residues 467 to 468 (NH) and Y527 contribute to the S-adenosyl-L-methionine site.

It belongs to the class V-like SAM-binding methyltransferase superfamily.

It localises to the nucleus. The protein localises to the cytoplasm. It carries out the reaction L-lysyl-[protein] + S-adenosyl-L-methionine = N(6)-methyl-L-lysyl-[protein] + S-adenosyl-L-homocysteine + H(+). Its function is as follows. Protein-lysine N-methyltransferase. Monomethylates PRMT5, modulating its transcriptional activity. May also act as a histone methyltransferase. Plays a critical role in cardiac development. Acts as a key epigenetic regulator of gene expression during cardiac development via its dual activities as a methyltransferase and negative regulator of HDAC1. This chain is Protein-lysine N-methyltransferase SMYD4 (smyd4), found in Danio rerio (Zebrafish).